Reading from the N-terminus, the 431-residue chain is Glucose-1-phosphate adenylyltransferase (431 aa).

Residue Lys-39 participates in beta-D-fructose 1,6-bisphosphate binding. AMP contacts are provided by Arg-40, His-46, and Arg-52. Tyr-114 is a binding site for alpha-D-glucose 1-phosphate. Residue Arg-130 participates in AMP binding. Alpha-D-glucose 1-phosphate-binding positions include Gly-179, 194 to 195 (EK), and Ser-212. 2 residues coordinate AMP: Glu-370 and Arg-386. Residues 419–423 (REMLR) and 429–431 (QER) contribute to the beta-D-fructose 1,6-bisphosphate site.

Belongs to the bacterial/plant glucose-1-phosphate adenylyltransferase family. In terms of assembly, homotetramer.

The enzyme catalyses alpha-D-glucose 1-phosphate + ATP + H(+) = ADP-alpha-D-glucose + diphosphate. The protein operates within glycan biosynthesis; glycogen biosynthesis. With respect to regulation, allosterically activated by fructose-1,6-bisphosphate (F16BP) and inhibited by AMP. Functionally, involved in the biosynthesis of ADP-glucose, a building block required for the elongation reactions to produce glycogen. Catalyzes the reaction between ATP and alpha-D-glucose 1-phosphate (G1P) to produce pyrophosphate and ADP-Glc. The chain is Glucose-1-phosphate adenylyltransferase from Escherichia coli O7:K1 (strain IAI39 / ExPEC).